The following is a 325-amino-acid chain: Tartrate-resistant acid phosphatase type 5 (325 aa).

Positions 1 to 21 (MDMWTALLILQALLLPSLADG) are cleaved as a signal peptide. Residues Asp33, Asp71, Tyr74, and Asn110 each coordinate Fe cation. Asn116 and Asn147 each carry an N-linked (GlcNAc...) asparagine glycan. Cysteines 161 and 219 form a disulfide. Fe cation contacts are provided by His205, His240, and His242.

The protein belongs to the metallophosphoesterase superfamily. Purple acid phosphatase family. In terms of assembly, exists either as monomer or, after proteolytic processing, as a dimer of two chains linked by disulfide bond(s). Fe cation serves as cofactor.

Its subcellular location is the lysosome. It carries out the reaction a phosphate monoester + H2O = an alcohol + phosphate. Its function is as follows. Involved in osteopontin/bone sialoprotein dephosphorylation. Its expression seems to increase in certain pathological states such as Gaucher and Hodgkin diseases, the hairy cell, the B-cell, and the T-cell leukemias. The polypeptide is Tartrate-resistant acid phosphatase type 5 (ACP5) (Homo sapiens (Human)).